The following is a 131-amino-acid chain: Glycine cleavage system H protein (131 aa).

The Lipoyl-binding domain occupies 24-106 (IATLGISAFA…HGEGWLLKVR (83 aa)). At K65 the chain carries N6-lipoyllysine.

It belongs to the GcvH family. As to quaternary structure, the glycine cleavage system is composed of four proteins: P, T, L and H. (R)-lipoate is required as a cofactor.

Its function is as follows. The glycine cleavage system catalyzes the degradation of glycine. The H protein shuttles the methylamine group of glycine from the P protein to the T protein. The sequence is that of Glycine cleavage system H protein from Microcystis aeruginosa (strain NIES-843 / IAM M-2473).